The following is a 558-amino-acid chain: Phosphatidylserine lipase ABHD16A (558 aa).

2 consecutive transmembrane segments (helical) span residues 60–80 and 93–113; these read ILAL…FAFF and VVPF…VACL. The Cytoplasmic segment spans residues 114-558; that stretch reads RGIGRWTNPQ…AQHFQMPWHL (445 aa). The region spanning 281–406 is the AB hydrolase-1 domain; it reads LVICCEGNAG…ALVTRTVRQH (126 aa). Active-site charge relay system residues include serine 355, aspartate 430, and histidine 507.

This sequence belongs to the AB hydrolase superfamily. ABHD16 family.

It is found in the membrane. It catalyses the reaction 1-heptadecanoyl-2-(5Z,8Z,11Z,14Z-eicosatetraenoyl)-sn-glycero-3-phosphoserine + H2O = 1-heptadecanoyl-sn-glycero-3-phosphoserine + (5Z,8Z,11Z,14Z)-eicosatetraenoate + H(+). The catalysed reaction is 1-hexadecanoyl-2-(9Z-octadecenoyl)-sn-glycero-3-phospho-L-serine + H2O = 1-hexadecanoyl-sn-glycero-3-phospho-L-serine + (9Z)-octadecenoate + H(+). The enzyme catalyses 1-octadecanoyl-2-(9Z,12Z-octadecadienoyl)-sn-glycero-3-phosphoserine + H2O = 1-octadecanoyl-sn-glycero-3-phosphoserine + (9Z,12Z)-octadecadienoate + H(+). It carries out the reaction 1-heptadecanoyl-2-(5Z,8Z,11Z,14Z-eicosatetraenoyl)-sn-glycero-3-phosphocholine + H2O = 1-heptadecanoyl-sn-glycero-3-phosphocholine + (5Z,8Z,11Z,14Z)-eicosatetraenoate + H(+). It catalyses the reaction 1-hexadecanoyl-2-(9Z-octadecenoyl)-sn-glycero-3-phosphoglycerol + H2O = 1-hexadecanoyl-sn-glycero-3-phosphoglycerol + (9Z)-octadecenoate + H(+). The catalysed reaction is 1-hexadecanoyl-2-(9Z-octadecenoyl)-sn-glycero-3-phospho-(1D-myo-inositol) + H2O = 1-hexadecanoyl-sn-glycero-3-phospho-(1D-myo-inositol) + (9Z)-octadecenoate + H(+). The enzyme catalyses 1-heptadecanoyl-2-(5Z,8Z,11Z,14Z-eicosatetraenoyl)-sn-glycero-3-phosphoethanolamine + H2O = 1-heptadecanoyl-sn-glycero-3-phosphoethanolamine + (5Z,8Z,11Z,14Z)-eicosatetraenoate + H(+). It carries out the reaction 1-hexadecanoyl-2-(9Z-octadecenoyl)-sn-glycero-3-phospho-(1'-sn-glycerol) + H2O = 1-hexadecanoyl-sn-glycero-3-phospho-(1'-sn-glycerol) + (9Z)-octadecenoate + H(+). It catalyses the reaction Hydrolyzes glycerol monoesters of long-chain fatty acids.. The catalysed reaction is 1-tetradecanoylglycerol + H2O = tetradecanoate + glycerol + H(+). The enzyme catalyses 2-hexadecanoylglycerol + H2O = glycerol + hexadecanoate + H(+). It carries out the reaction 1-(9Z-octadecenoyl)-glycerol + H2O = glycerol + (9Z)-octadecenoate + H(+). It catalyses the reaction 2-(9Z-octadecenoyl)-glycerol + H2O = glycerol + (9Z)-octadecenoate + H(+). The catalysed reaction is 2-(9Z,12Z-octadecadienoyl)-glycerol + H2O = (9Z,12Z)-octadecadienoate + glycerol + H(+). The enzyme catalyses 1-(5Z,8Z,11Z,14Z-eicosatetraenoyl)-glycerol + H2O = glycerol + (5Z,8Z,11Z,14Z)-eicosatetraenoate + H(+). It carries out the reaction 2-(5Z,8Z,11Z,14Z-eicosatetraenoyl)-glycerol + H2O = glycerol + (5Z,8Z,11Z,14Z)-eicosatetraenoate + H(+). It catalyses the reaction prostaglandin D2-1-glycerol ester + H2O = prostaglandin D2 + glycerol + H(+). The catalysed reaction is 2-glyceryl-15-deoxy-Delta(12,14)-prostaglandin J2 + H2O = 15-deoxy-Delta(12,14)-prostaglandin J2 + glycerol + H(+). The enzyme catalyses 1-(9Z,12Z-octadecadienoyl)-glycerol + H2O = (9Z,12Z)-octadecadienoate + glycerol + H(+). Specifically inhibited by alpha-alkylidene-beta-lactone KC01 ((Z)-6-(2-Oxo-4-tridecyloxetan-3-ylidene)hexanamide). Phosphatidylserine (PS) lipase that mediates the hydrolysis of phosphatidylserine to generate lysophosphatidylserine (LPS). LPS constitutes a class of signaling lipids that regulates immunological and neurological processes. Has no activity towards diacylglycerol, triacylglycerol or lysophosphatidylserine lipase. Also has monoacylglycerol lipase activity, with preference for 1-(9Z,12Z-octadecadienoyl)-glycerol (1-LG) and 2-glyceryl-15-deoxy-Delta(12,14)-prostaglandin J2 (15d-PGJ(2)-G). This Mus musculus (Mouse) protein is Phosphatidylserine lipase ABHD16A.